The sequence spans 473 residues: Photosystem II CP43 reaction center protein (473 aa).

A propeptide spanning residues 1-14 is cleaved from the precursor; sequence MKTLYSRRRFYHVE. Threonine 15 carries the post-translational modification N-acetylthreonine. Position 15 is a phosphothreonine (threonine 15). The next 5 membrane-spanning stretches (helical) occupy residues 69 to 93, 134 to 155, 178 to 200, 255 to 275, and 291 to 312; these read LFEVAHFVPEKPMYEQGLILLPHLA, LLGPETLEESFPFFGYVWKDRN, KALYFGGVYDTWAPGGGDVRKIT, KPFAWARRALVWSGEAYLSYS, and WFNNTAYPSEFYGPTGPEASQA. Residue glutamate 367 participates in [CaMn4O5] cluster binding. A helical transmembrane segment spans residues 447-471; sequence RARAAAAGFEKGIDRDFEPVLSMTP.

Belongs to the PsbB/PsbC family. PsbC subfamily. In terms of assembly, PSII is composed of 1 copy each of membrane proteins PsbA, PsbB, PsbC, PsbD, PsbE, PsbF, PsbH, PsbI, PsbJ, PsbK, PsbL, PsbM, PsbT, PsbX, PsbY, PsbZ, Psb30/Ycf12, at least 3 peripheral proteins of the oxygen-evolving complex and a large number of cofactors. It forms dimeric complexes. Binds multiple chlorophylls and provides some of the ligands for the Ca-4Mn-5O cluster of the oxygen-evolving complex. It may also provide a ligand for a Cl- that is required for oxygen evolution. PSII binds additional chlorophylls, carotenoids and specific lipids. is required as a cofactor.

The protein resides in the plastid. The protein localises to the chloroplast thylakoid membrane. Functionally, one of the components of the core complex of photosystem II (PSII). It binds chlorophyll and helps catalyze the primary light-induced photochemical processes of PSII. PSII is a light-driven water:plastoquinone oxidoreductase, using light energy to abstract electrons from H(2)O, generating O(2) and a proton gradient subsequently used for ATP formation. The sequence is that of Photosystem II CP43 reaction center protein from Solanum bulbocastanum (Wild potato).